Consider the following 195-residue polypeptide: Putative deoxynucleoside kinase (195 aa).

This is Putative deoxynucleoside kinase from Frog virus 3 (isolate Goorha) (FV-3).